Here is a 404-residue protein sequence, read N- to C-terminus: Cysteine desulfurase IscS (404 aa).

Pyridoxal 5'-phosphate contacts are provided by residues 75–76, asparagine 155, glutamine 183, and 203–205; these read AT and SAH. N6-(pyridoxal phosphate)lysine is present on lysine 206. Position 243 (threonine 243) interacts with pyridoxal 5'-phosphate. The Cysteine persulfide intermediate role is filled by cysteine 328. Cysteine 328 contacts [2Fe-2S] cluster.

Belongs to the class-V pyridoxal-phosphate-dependent aminotransferase family. NifS/IscS subfamily. Homodimer. Forms a heterotetramer with IscU, interacts with other sulfur acceptors. The cofactor is pyridoxal 5'-phosphate.

It localises to the cytoplasm. It catalyses the reaction (sulfur carrier)-H + L-cysteine = (sulfur carrier)-SH + L-alanine. The protein operates within cofactor biosynthesis; iron-sulfur cluster biosynthesis. Master enzyme that delivers sulfur to a number of partners involved in Fe-S cluster assembly, tRNA modification or cofactor biosynthesis. Catalyzes the removal of elemental sulfur atoms from cysteine to produce alanine. Functions as a sulfur delivery protein for Fe-S cluster synthesis onto IscU, an Fe-S scaffold assembly protein, as well as other S acceptor proteins. This chain is Cysteine desulfurase IscS, found in Ectopseudomonas mendocina (strain ymp) (Pseudomonas mendocina).